A 115-amino-acid polypeptide reads, in one-letter code: Putative type I restriction enzyme MpnIIP endonuclease subunit middle part (115 aa).

Its function is as follows. The middle section of a putative type I restriction enzyme that if reconstituted might recognize 5'-GAN(7)TAY-3' and cleave a random distance away. Subunit R is required for both nuclease and ATPase activities, but not for modification. The protein is Putative type I restriction enzyme MpnIIP endonuclease subunit middle part of Mycoplasma pneumoniae (strain ATCC 29342 / M129 / Subtype 1) (Mycoplasmoides pneumoniae).